Reading from the N-terminus, the 344-residue chain is Fructose-1,6-bisphosphatase class 1 (344 aa).

Glutamate 91, aspartate 110, leucine 112, and aspartate 113 together coordinate Mg(2+). Residues aspartate 113–serine 116 and asparagine 200 each bind substrate. Glutamate 272 contacts Mg(2+).

Belongs to the FBPase class 1 family. As to quaternary structure, homotetramer. It depends on Mg(2+) as a cofactor.

The protein resides in the cytoplasm. The catalysed reaction is beta-D-fructose 1,6-bisphosphate + H2O = beta-D-fructose 6-phosphate + phosphate. The protein operates within carbohydrate biosynthesis; Calvin cycle. This Rhodopseudomonas palustris (strain BisB18) protein is Fructose-1,6-bisphosphatase class 1.